A 304-amino-acid polypeptide reads, in one-letter code: Glutamyl-Q tRNA(Asp) synthetase (304 aa).

L-glutamate is bound by residues 14–18 (RFAPS) and glutamate 50. A 'HIGH' region motif is present at residues 17 to 27 (PSPSGPLHFGS). Zn(2+) is bound by residues cysteine 106, cysteine 108, tyrosine 120, and cysteine 124. L-glutamate is bound by residues tyrosine 178 and arginine 196. Residues 234-238 (KLSKQ) carry the 'KMSKS' region motif. Lysine 237 is an ATP binding site.

This sequence belongs to the class-I aminoacyl-tRNA synthetase family. GluQ subfamily. Requires Zn(2+) as cofactor.

Functionally, catalyzes the tRNA-independent activation of glutamate in presence of ATP and the subsequent transfer of glutamate onto a tRNA(Asp). Glutamate is transferred on the 2-amino-5-(4,5-dihydroxy-2-cyclopenten-1-yl) moiety of the queuosine in the wobble position of the QUC anticodon. The polypeptide is Glutamyl-Q tRNA(Asp) synthetase (Vibrio cholerae serotype O1 (strain ATCC 39315 / El Tor Inaba N16961)).